We begin with the raw amino-acid sequence, 59 residues long: Large ribosomal subunit protein bL32c (59 aa).

The interval 1 to 20 (MAVPKKRTSKSKKRIRKSVW) is disordered.

It belongs to the bacterial ribosomal protein bL32 family.

Its subcellular location is the plastid. The protein localises to the chloroplast. The sequence is that of Large ribosomal subunit protein bL32c from Angiopteris evecta (Mule's foot fern).